Here is a 257-residue protein sequence, read N- to C-terminus: Adenosylcobinamide-GDP ribazoletransferase (257 aa).

4 helical membrane passes run 28 to 48 (FARSPWTFPVVGYLVGGLVAL), 50 to 70 (LFVPAPAPTVALAFVLAVYAV), 110 to 130 (VALALVVLGLATAALGLVEVA), and 199 to 219 (WPQVLPGLAALLVALATAALV).

The protein belongs to the CobS family. The cofactor is Mg(2+).

The protein localises to the cell membrane. The catalysed reaction is alpha-ribazole + adenosylcob(III)inamide-GDP = adenosylcob(III)alamin + GMP + H(+). It carries out the reaction alpha-ribazole 5'-phosphate + adenosylcob(III)inamide-GDP = adenosylcob(III)alamin 5'-phosphate + GMP + H(+). Its pathway is cofactor biosynthesis; adenosylcobalamin biosynthesis; adenosylcobalamin from cob(II)yrinate a,c-diamide: step 7/7. In terms of biological role, joins adenosylcobinamide-GDP and alpha-ribazole to generate adenosylcobalamin (Ado-cobalamin). Also synthesizes adenosylcobalamin 5'-phosphate from adenosylcobinamide-GDP and alpha-ribazole 5'-phosphate. The protein is Adenosylcobinamide-GDP ribazoletransferase of Halorubrum lacusprofundi (strain ATCC 49239 / DSM 5036 / JCM 8891 / ACAM 34).